The primary structure comprises 199 residues: Prostatic spermine-binding protein (199 aa).

An N-terminal signal peptide occupies residues 1–18; that stretch reads MLLLLTLAFLASPTCRAQ. A Jacalin-type lectin domain is found at 19-151; it reads NVLGNAAGKY…VRGIGFKWGN (133 aa). N-linked (GlcNAc...) asparagine glycosylation is present at Asn62. Positions 159-199 are disordered; it reads HYNNKEDKADNKDADNKDADNKDDGDEDDDGNDDDDQKDES. Residues 160 to 180 show a composition bias toward basic and acidic residues; that stretch reads YNNKEDKADNKDADNKDADNK. The span at 181 to 199 shows a compositional bias: acidic residues; that stretch reads DDGDEDDDGNDDDDQKDES.

To rat SBP. As to expression, prostate.

In terms of biological role, this protein seems to be functional equivalent to rat prostatic spermine-binding protein, which is involved in polyamine binding. The chain is Prostatic spermine-binding protein (Sbp) from Mus musculus (Mouse).